Consider the following 229-residue polypeptide: Flagellar L-ring protein (229 aa).

A signal peptide spans 1–25 (MKQVRLPSSATVRAACAVAVAALAG). Cysteine 26 carries the N-palmitoyl cysteine lipid modification. Residue cysteine 26 is the site of S-diacylglycerol cysteine attachment.

The protein belongs to the FlgH family. As to quaternary structure, the basal body constitutes a major portion of the flagellar organelle and consists of four rings (L,P,S, and M) mounted on a central rod.

The protein resides in the cell outer membrane. It is found in the bacterial flagellum basal body. In terms of biological role, assembles around the rod to form the L-ring and probably protects the motor/basal body from shearing forces during rotation. This Burkholderia orbicola (strain AU 1054) protein is Flagellar L-ring protein.